Here is a 284-residue protein sequence, read N- to C-terminus: Serine/arginine-rich splicing factor RS2Z32 (284 aa).

Positions threonine 11–glycine 81 constitute an RRM domain. Residues isoleucine 74–glycine 97 are disordered. 2 consecutive CCHC-type zinc fingers follow at residues glycine 99 to alanine 116 and asparagine 121 to asparagine 138. Residues isoleucine 132 to proline 284 are disordered. Basic residues predominate over residues arginine 159–serine 180. 3 positions are modified to phosphoserine: serine 166, serine 168, and serine 184. Positions valine 186–glutamate 203 are enriched in basic and acidic residues. A phosphoserine mark is found at serine 205, serine 207, serine 214, serine 216, serine 225, serine 235, serine 255, serine 265, serine 277, and serine 281. A compositionally biased stretch (basic and acidic residues) spans lysine 209 to proline 236.

This sequence belongs to the splicing factor SR family. RS2Z subfamily. Component of the spliceosome. In terms of processing, extensively phosphorylated on serine residues in the RS domain.

The protein localises to the nucleus. Probably involved in intron recognition and spliceosome assembly. The sequence is that of Serine/arginine-rich splicing factor RS2Z32 (RS2Z32) from Arabidopsis thaliana (Mouse-ear cress).